Here is a 664-residue protein sequence, read N- to C-terminus: CRISPR-associated DNA-binding protein Cas12m (664 aa).

Positions 1–137 (MKRVTITIDG…AKYRELIGSD (137 aa)) are recognition domain (REC1-N). The segment at 138–212 (EETAQMDTEI…AAKDRIRAAG (75 aa)) is recognition domain (REC2). Residues 213-270 (NDIENLEKDRQAAVIKAYNNSGLWWGNYNAVLESYKKARIKALKDGAELKYHRFDGSG) are recognition domain (REC1-C). Residues 271–390 (RFTNQIQGGM…VWSVVFTFTT (120 aa)) are wedge domain (WED). The segment at 391–404 (DCPTYDQRSSTGNR) is linker. The ruvC-I stretch occupies residues 405 to 618 (CGLNLGWKKQ…KNGTQIEQVS (214 aa)). Positions 618–650 (STASSATCSACKGKMEQVDGIMWRCRECRALVD) are target nucleic-acid binding (TNB). Positions 625, 628, 642, and 645 each coordinate Zn(2+). The interval 651-664 (QDINAAANLFREVL) is ruvC-II. Aspartate 652 contacts Mg(2+).

This sequence belongs to the CRISPR-associated DNA-binding protein Cas12m family. Mg(2+) is required as a cofactor. It depends on Zn(2+) as a cofactor.

Functionally, CRISPR (clustered regularly interspaced short palindromic repeat), is an adaptive immune system that provides protection against mobile genetic elements (viruses, transposable elements and conjugative plasmids). CRISPR clusters contain sequences complementary to antecedent mobile elements and target invading nucleic acids. CRISPR clusters are transcribed and processed into CRISPR RNA (crRNA). Recognizes a short motif in the CRISPR repeat sequences (the 5' PAM or protospacer adjacent motif, 5'-CCN-3' in this organism) to help distinguish self versus nonself, as targets within the bacterial CRISPR locus do not have PAMs. Cas12m-crRNA binds DNA in a PAM-dependent, crRNA-guided fashion. DNA-binding probably inhibits transcription, leading to gene silencing. Upon expression in E.coli as a CRISPR region preferentially binds to its associated crRNA. Probably required for pre-crRNA processing to mature crRNA. The sequence is that of CRISPR-associated DNA-binding protein Cas12m from Pelobacter propionicus (strain DSM 2379 / NBRC 103807 / OttBd1).